A 70-amino-acid polypeptide reads, in one-letter code: uncharacterized protein (70 aa).

A helical membrane pass occupies residues 4-24; sequence VKTIAMLAMLVIVAALIYMGY.

It is found in the host membrane. This is an uncharacterized protein from Dryophytes versicolor (chameleon treefrog).